We begin with the raw amino-acid sequence, 86 residues long: Toxin Tpa6 (86 aa).

Residues 1–20 (MSIFPIALALLLIGLEEGEA) form the signal peptide. Positions 22-85 (RDGYPLSKNN…WGDPGTKPCM (64 aa)) constitute an LCN-type CS-alpha/beta domain. 4 cysteine pairs are disulfide-bonded: Cys33-Cys84, Cys37-Cys58, Cys43-Cys64, and Cys47-Cys66.

It belongs to the long (4 C-C) scorpion toxin superfamily. Sodium channel inhibitor family. Beta subfamily. Expressed by the venom gland.

The protein localises to the secreted. Functionally, beta toxins bind voltage-independently at site-4 of sodium channels (Nav) and shift the voltage of activation toward more negative potentials thereby affecting sodium channel activation and promoting spontaneous and repetitive firing. In Tityus pachyurus (Colombian scorpion), this protein is Toxin Tpa6.